A 518-amino-acid polypeptide reads, in one-letter code: GRIN2-like protein (518 aa).

Disordered regions lie at residues 1–23 and 467–500; these read MGLE…QSRT and QTEP…FRTM. Residues 476 to 494 show a composition bias toward basic and acidic residues; it reads KSDEDPLNKEPSSDKMEKK.

In terms of assembly, may interact with GNAO1.

In terms of biological role, may be involved in neurite outgrowth. This is GRIN2-like protein from Gallus gallus (Chicken).